The sequence spans 394 residues: MQKTATTPSKILDLTAAAFLLVAFLTGIAGALQTPTLSIFLADELKARPIMVGFFFTGSAIMGILVSQFLARHSDKQGDRKLLILLCCLFGVLACTLFAWNRNYFILLSTGVLLSSFASTANPQMFALAREHADRTGRETVMFSTFLRAQISLAWVIGPPLAYELAMGFSFKVMYLTAAIAFVVCGLIVWLFLPSIQRNIPVVTQPVEILPSTHRKRDTRLLFVVCSMMWAANNLYMINMPLFIIDELHLTDKLTGEMIGIAAGLEIPMMLIAGYYMKRIGKRLLMLIAIVSGMCFYASVLMATTPAVELELQILNAIFLGILCGIGMLYFQDLMPEKIGSATTLYANTSRVGWIIAGSVDGIMVEIWSYHALFWLAIGMLGIAMICLLFIKDI.

Topologically, residues 1–10 are periplasmic; it reads MQKTATTPSK. Residues 11-31 traverse the membrane as a helical segment; it reads ILDLTAAAFLLVAFLTGIAGA. Over 32–49 the chain is Cytoplasmic; sequence LQTPTLSIFLADELKARP. A helical transmembrane segment spans residues 50–70; the sequence is IMVGFFFTGSAIMGILVSQFL. Over 71–80 the chain is Periplasmic; it reads ARHSDKQGDR. A helical transmembrane segment spans residues 81-101; it reads KLLILLCCLFGVLACTLFAWN. Residues 102–104 are Cytoplasmic-facing; that stretch reads RNY. The chain crosses the membrane as a helical span at residues 105-125; that stretch reads FILLSTGVLLSSFASTANPQM. The Periplasmic segment spans residues 126–150; sequence FALAREHADRTGRETVMFSTFLRAQ. The helical transmembrane segment at 151-171 threads the bilayer; the sequence is ISLAWVIGPPLAYELAMGFSF. Position 172 (Lys-172) is a topological domain, cytoplasmic. Residues 173–193 form a helical membrane-spanning segment; it reads VMYLTAAIAFVVCGLIVWLFL. Residues 194–224 lie on the Periplasmic side of the membrane; sequence PSIQRNIPVVTQPVEILPSTHRKRDTRLLFV. The chain crosses the membrane as a helical span at residues 225 to 245; the sequence is VCSMMWAANNLYMINMPLFII. The Cytoplasmic portion of the chain corresponds to 246–253; that stretch reads DELHLTDK. Residues 254-274 form a helical membrane-spanning segment; sequence LTGEMIGIAAGLEIPMMLIAG. The Periplasmic portion of the chain corresponds to 275–283; the sequence is YYMKRIGKR. The helical transmembrane segment at 284–304 threads the bilayer; sequence LLMLIAIVSGMCFYASVLMAT. Residues 305–310 are Cytoplasmic-facing; the sequence is TPAVEL. Residues 311 to 331 traverse the membrane as a helical segment; sequence ELQILNAIFLGILCGIGMLYF. Topologically, residues 332–370 are periplasmic; the sequence is QDLMPEKIGSATTLYANTSRVGWIIAGSVDGIMVEIWSY. A helical transmembrane segment spans residues 371–391; it reads HALFWLAIGMLGIAMICLLFI. The Cytoplasmic portion of the chain corresponds to 392-394; it reads KDI.

This sequence belongs to the major facilitator superfamily. Set transporter family.

The protein resides in the cell inner membrane. Its function is as follows. Involved in the efflux of sugars. The physiological role may be the detoxification of non-metabolizable sugar analogs. This is Sugar efflux transporter C (setC) from Escherichia coli (strain K12).